The sequence spans 500 residues: 4-aminobutyrate aminotransferase, mitochondrial (500 aa).

The N-terminal 27 residues, 1–27 (MAFLLTTRRLVCSSQKNLHLFTPGSRY), are a transit peptide targeting the mitochondrion. Cys163 provides a ligand contact to [2Fe-2S] cluster. 164–165 (GS) contacts pyridoxal 5'-phosphate. Cys166 contributes to the [2Fe-2S] cluster binding site. Arg220 is a binding site for substrate. Lys231 is modified (N6-succinyllysine). An N6-acetyllysine; alternate modification is found at Lys252. Lys252 bears the N6-succinyllysine; alternate mark. N6-acetyllysine is present on residues Lys279 and Lys318. Lys357 carries the post-translational modification N6-(pyridoxal phosphate)lysine. Residue Thr381 coordinates pyridoxal 5'-phosphate. Lys413 is modified (N6-acetyllysine; alternate). At Lys413 the chain carries N6-succinyllysine; alternate. 2 positions are modified to N6-acetyllysine: Lys452 and Lys470.

It belongs to the class-III pyridoxal-phosphate-dependent aminotransferase family. Homodimer; disulfide-linked. Requires pyridoxal 5'-phosphate as cofactor. [2Fe-2S] cluster is required as a cofactor.

The protein localises to the mitochondrion matrix. It carries out the reaction 4-aminobutanoate + 2-oxoglutarate = succinate semialdehyde + L-glutamate. It catalyses the reaction (S)-3-amino-2-methylpropanoate + 2-oxoglutarate = 2-methyl-3-oxopropanoate + L-glutamate. Its function is as follows. Catalyzes the conversion of gamma-aminobutyrate and L-beta-aminoisobutyrate to succinate semialdehyde and methylmalonate semialdehyde, respectively. Can also convert delta-aminovalerate and beta-alanine. This is 4-aminobutyrate aminotransferase, mitochondrial from Rattus norvegicus (Rat).